The primary structure comprises 632 residues: MHGLLLAGLAVALPLGVAGHPARPQTALSPRGIDVNAYRFTSTAKYNEHKTTSQMVQSFAYSKDDDYVATATKLVKSTFPNMTFRTVKDHYIGTNGIGHVHFKQTAHDIDIDNADFNVNIGRDGKVFTFGNSFYQGEMPKTNPMVKRDYSDPVKALHGAIKTLKIPVKPESAKAMPMDEVETFKFEGTSGALSEPKAKLVYIQKDGNLHLTWRVETDVGDNWLLSYVDSKESETVHNVVDYVASADYKVFAFGLNDPTEGQPSMIKDPWNTTGSGSPFTWHGDGKTDYTVTRGNNVAAQDNPSGGSQWENNYRPDSPQLSFVYDYSDQMEPEDYKDFAITQLFYTTNTFHDVLYSLGFTEEAGNFQVNNGNKGGKGNDFAICNAQDGSGTNNANFATPPDGQPGRMRMYTWTTSKPKRDGDLEAGIVIHEYTHGLSNRLCGGPANSNCLNDLEAGGMGEGWGDFYATAIRLKQGDTHDTDYTMGEWAANQKGGIREYPYSTNMQTNPYTYADVKGMREVHGIGTVWATILYDVLWNLIDDHGMGKNVMPKMVDGVPTDGRTLAMKLVLDGMTLMPCNPNFMQARDAIIDADMALTKGANKCSLMKAFAKRGLGSNTKPGKGYTNNFDMPSGC.

The first 19 residues, 1-19 (MHGLLLAGLAVALPLGVAG), serve as a signal peptide directing secretion. Residues 20–244 (HPARPQTALS…VHNVVDYVAS (225 aa)) constitute a propeptide that is removed on maturation. The N-linked (GlcNAc...) asparagine glycan is linked to N270. Positions 294 to 310 (NNVAAQDNPSGGSQWEN) are enriched in polar residues. The segment at 294–313 (NNVAAQDNPSGGSQWENNYR) is disordered. Position 429 (H429) interacts with Zn(2+). The active site involves E430. H433 contributes to the Zn(2+) binding site.

The protein belongs to the peptidase M36 family. It depends on Zn(2+) as a cofactor.

It is found in the secreted. In terms of biological role, secreted metalloproteinase probably acting as a virulence factor. This chain is Extracellular metalloproteinase 2 (MEP2), found in Arthroderma otae (Microsporum canis).